The following is a 129-amino-acid chain: Ribosome-binding factor A (129 aa).

Belongs to the RbfA family. In terms of assembly, monomer. Binds 30S ribosomal subunits, but not 50S ribosomal subunits or 70S ribosomes.

It is found in the cytoplasm. In terms of biological role, one of several proteins that assist in the late maturation steps of the functional core of the 30S ribosomal subunit. Associates with free 30S ribosomal subunits (but not with 30S subunits that are part of 70S ribosomes or polysomes). Required for efficient processing of 16S rRNA. May interact with the 5'-terminal helix region of 16S rRNA. This Azotobacter vinelandii (strain DJ / ATCC BAA-1303) protein is Ribosome-binding factor A.